A 166-amino-acid chain; its full sequence is Phospholipase A2 inhibitor clone 11 (166 aa).

Positions 1 to 19 (MRLILLSGLLLLGIFLANG) are cleaved as a signal peptide. Residues 46–161 (LKGSFLIVHK…CDDNLLVVCE (116 aa)) form the C-type lectin domain. 2 cysteine pairs are disulfide-bonded: cysteine 83/cysteine 160 and cysteine 138/cysteine 152. Asparagine 122 carries an N-linked (GlcNAc...) asparagine glycan.

This sequence belongs to the alpha-type phospholipase A2 inhibitor family. Homotrimer; non-covalently linked. In terms of tissue distribution, expressed by the liver.

The protein localises to the secreted. This phospholipase A2 inhibitor binds directly phospholipase A2 in the presence or absence of calcium. In Bothrops neuwiedi (Neuwied's lancehead), this protein is Phospholipase A2 inhibitor clone 11.